The primary structure comprises 320 residues: ATP-dependent 6-phosphofructokinase (320 aa).

Residue Gly12 participates in ATP binding. 22-26 (RSVIR) provides a ligand contact to ADP. ATP-binding positions include 73–74 (RF) and 103–106 (GDGS). Residue Asp104 coordinates Mg(2+). Residue 126 to 128 (TID) coordinates substrate. Asp128 functions as the Proton acceptor in the catalytic mechanism. Arg155 is a binding site for ADP. Residues Arg163 and 170 to 172 (MGR) contribute to the substrate site. Residues 186–188 (GAE) and 214–216 (KRH) contribute to the ADP site. Residues Glu223, Arg244, and 250 to 253 (HIQR) contribute to the substrate site.

The protein belongs to the phosphofructokinase type A (PFKA) family. ATP-dependent PFK group I subfamily. Prokaryotic clade 'B1' sub-subfamily. As to quaternary structure, homotetramer. Requires Mg(2+) as cofactor.

It is found in the cytoplasm. It carries out the reaction beta-D-fructose 6-phosphate + ATP = beta-D-fructose 1,6-bisphosphate + ADP + H(+). It functions in the pathway carbohydrate degradation; glycolysis; D-glyceraldehyde 3-phosphate and glycerone phosphate from D-glucose: step 3/4. Its activity is regulated as follows. Allosterically activated by ADP and other diphosphonucleosides, and allosterically inhibited by phosphoenolpyruvate. Catalyzes the phosphorylation of D-fructose 6-phosphate to fructose 1,6-bisphosphate by ATP, the first committing step of glycolysis. This chain is ATP-dependent 6-phosphofructokinase, found in Tolumonas auensis (strain DSM 9187 / NBRC 110442 / TA 4).